The chain runs to 565 residues: Thiol:disulfide interchange protein DsbD (565 aa).

Positions 1 to 19 are cleaved as a signal peptide; that stretch reads MAQRIFTLILLLCSTSVFA. Intrachain disulfides connect cysteine 122–cysteine 128 and cysteine 182–cysteine 304. The next 7 helical transmembrane spans lie at 163 to 183, 208 to 228, 243 to 263, 296 to 316, 323 to 343, 357 to 377, and 384 to 404; these read LPFS…TPCV, LLTF…GLVV, YVLI…FGLF, IAGL…LLYI, WLGG…LMLI, WMEQ…VFLL, and VWGL…AFIT. The region spanning 434 to 565 is the Thioredoxin domain; it reads WAFGATHTAQ…FSAHLRDRQP (132 aa). Cysteine 480 and cysteine 483 are oxidised to a cystine.

Belongs to the thioredoxin family. DsbD subfamily.

It localises to the cell inner membrane. The enzyme catalyses [protein]-dithiol + NAD(+) = [protein]-disulfide + NADH + H(+). The catalysed reaction is [protein]-dithiol + NADP(+) = [protein]-disulfide + NADPH + H(+). Functionally, required to facilitate the formation of correct disulfide bonds in some periplasmic proteins and for the assembly of the periplasmic c-type cytochromes. Acts by transferring electrons from cytoplasmic thioredoxin to the periplasm. This transfer involves a cascade of disulfide bond formation and reduction steps. The sequence is that of Thiol:disulfide interchange protein DsbD from Shigella boydii serotype 4 (strain Sb227).